The primary structure comprises 235 residues: Aspartate/glutamate leucyltransferase (235 aa).

This sequence belongs to the R-transferase family. Bpt subfamily.

The protein resides in the cytoplasm. The catalysed reaction is N-terminal L-glutamyl-[protein] + L-leucyl-tRNA(Leu) = N-terminal L-leucyl-L-glutamyl-[protein] + tRNA(Leu) + H(+). It catalyses the reaction N-terminal L-aspartyl-[protein] + L-leucyl-tRNA(Leu) = N-terminal L-leucyl-L-aspartyl-[protein] + tRNA(Leu) + H(+). Functions in the N-end rule pathway of protein degradation where it conjugates Leu from its aminoacyl-tRNA to the N-termini of proteins containing an N-terminal aspartate or glutamate. The protein is Aspartate/glutamate leucyltransferase of Pseudomonas putida (strain W619).